A 143-amino-acid polypeptide reads, in one-letter code: uncharacterized protein (143 aa).

Residues 4 to 24 form a helical membrane-spanning segment; that stretch reads FGIVALSIICSIAFLFVAYGV. A disordered region spans residues 97-143; the sequence is TVPFVNTEAPPPRLSSSFSRQSGENAETQSQVSASPFNDKNSPYVQE. Polar residues predominate over residues 110–143; the sequence is LSSSFSRQSGENAETQSQVSASPFNDKNSPYVQE.

Its subcellular location is the golgi apparatus membrane. This is an uncharacterized protein from Schizosaccharomyces pombe (strain 972 / ATCC 24843) (Fission yeast).